A 379-amino-acid polypeptide reads, in one-letter code: Dual-specificity RNA methyltransferase RlmN (379 aa).

Glutamate 95 (proton acceptor) is an active-site residue. In terms of domain architecture, Radical SAM core spans 101 to 345 (EETRGTLCVS…TTVRKTRGDD (245 aa)). The cysteines at positions 108 and 350 are disulfide-linked. [4Fe-4S] cluster is bound by residues cysteine 115, cysteine 119, and cysteine 122. Residues 176–177 (GE), serine 208, 230–232 (SLH), and asparagine 307 contribute to the S-adenosyl-L-methionine site. Cysteine 350 (S-methylcysteine intermediate) is an active-site residue.

The protein belongs to the radical SAM superfamily. RlmN family. The cofactor is [4Fe-4S] cluster.

Its subcellular location is the cytoplasm. It carries out the reaction adenosine(2503) in 23S rRNA + 2 reduced [2Fe-2S]-[ferredoxin] + 2 S-adenosyl-L-methionine = 2-methyladenosine(2503) in 23S rRNA + 5'-deoxyadenosine + L-methionine + 2 oxidized [2Fe-2S]-[ferredoxin] + S-adenosyl-L-homocysteine. The enzyme catalyses adenosine(37) in tRNA + 2 reduced [2Fe-2S]-[ferredoxin] + 2 S-adenosyl-L-methionine = 2-methyladenosine(37) in tRNA + 5'-deoxyadenosine + L-methionine + 2 oxidized [2Fe-2S]-[ferredoxin] + S-adenosyl-L-homocysteine. Specifically methylates position 2 of adenine 2503 in 23S rRNA and position 2 of adenine 37 in tRNAs. m2A2503 modification seems to play a crucial role in the proofreading step occurring at the peptidyl transferase center and thus would serve to optimize ribosomal fidelity. This is Dual-specificity RNA methyltransferase RlmN from Burkholderia vietnamiensis (strain G4 / LMG 22486) (Burkholderia cepacia (strain R1808)).